Consider the following 136-residue polypeptide: MLSNPQRTRFRKQHRGRMKGISYRGNHICFGRYALQALEPAWITSRQIEAGRRAMSRNVRRGGQIWVRIFPDKPVTVRPTETRMGSGKGFPEYWVAVVKPGKILYEMGGVPENIARKAISIASSKMPIRTQFIISG.

Belongs to the universal ribosomal protein uL16 family. Part of the 50S ribosomal subunit.

It is found in the plastid. The protein localises to the chloroplast. In Phaseolus angularis (Azuki bean), this protein is Large ribosomal subunit protein uL16c.